A 100-amino-acid polypeptide reads, in one-letter code: MSGMEWFPLLGLANRARKVVSGEDLVIKEIRNARAKLVLLTEDASSNTAKKVTDKCNYYKVPYKKVESRAVLGRSIGKEARVVVAVTDQGFANKLISLLD.

Belongs to the eukaryotic ribosomal protein eL8 family.

RNA-binding protein that recognizes the K-turn motif present in ribosomal RNA, but also in box C/D and box C'/D' sRNAs. In Bacillus subtilis (strain 168), this protein is RNA-binding protein YlxQ.